Reading from the N-terminus, the 412-residue chain is MNTGTYLMPTAAYIHIPFCRQRCFYCDFPIAVTGFQSLTLDGWVGEYVEAVCREIAGQQHQGQPLQTVFFGGGTPSLLPITGLEKILLAVDQYLGIAPDAEISIEIDPGTFDQVQLQGYKNLGINRFSLGVQAFQDNLLALCGRHHRRRDIDQALTAIAKENIENWSLDLITGLPEQTAADWHSSLTLALAAGPKHISCYDLVLEPQTVFDKWEQRGKLAVPPPERSADFYRHGQEVLTQAGFHHYEISNYGRPGHQCRHNQIYWRNLPYYGLGMGATSYIDGKRFGRPRTRNGYYQWLESWLNQGCPIPGERVSPLENLLESLMLGLRLTAGVTWAQLPSVNQTEKAKILATLTSFGDRRWLEFYGEDNQMLAPNQTTTETVQRFCFTDPEGILYSNQILSALFAALEEDF.

In terms of domain architecture, Radical SAM core spans 4–241; sequence GTYLMPTAAY…RHGQEVLTQA (238 aa). Tyr-13 lines the S-adenosyl-L-methionine pocket. [2Fe-2S] cluster contacts are provided by Cys-19, Cys-23, and Cys-26. Residues Gly-72, 73 to 74, Glu-105, Gln-132, Arg-144, and Asp-169 each bind S-adenosyl-L-methionine; that span reads GT.

Belongs to the anaerobic coproporphyrinogen-III oxidase family. HemW subfamily. Requires [4Fe-4S] cluster as cofactor.

Its subcellular location is the cytoplasm. Its function is as follows. Probably acts as a heme chaperone, transferring heme to an unknown acceptor. Binds one molecule of heme per monomer, possibly covalently. Binds 1 [2Fe-2S] cluster. Although this protein has sequence motifs typically found in proteins binding the [4Fe-4S]-AdoMet radical-SAM cluster and S-adenosylmethionine, spectroscopic evidence suggests that a [2Fe-2S] cluster is present; S-adenosylmethionine was not detected. Has no detectable coproporphyrinogen-III oxidase activity. This Synechocystis sp. (strain ATCC 27184 / PCC 6803 / Kazusa) protein is Heme chaperone HemW.